The following is a 191-amino-acid chain: Gene BABR protein 1 (191 aa).

This is Gene BABR protein 1 from Babesia bovis.